Consider the following 223-residue polypeptide: Small ribosomal subunit protein uS3 (223 aa).

One can recognise a KH type-2 domain in the interval isoleucine 38–lysine 106.

Belongs to the universal ribosomal protein uS3 family. As to quaternary structure, part of the 30S ribosomal subunit. Forms a tight complex with proteins S10 and S14.

Binds the lower part of the 30S subunit head. Binds mRNA in the 70S ribosome, positioning it for translation. This is Small ribosomal subunit protein uS3 from Lactobacillus delbrueckii subsp. bulgaricus (strain ATCC 11842 / DSM 20081 / BCRC 10696 / JCM 1002 / NBRC 13953 / NCIMB 11778 / NCTC 12712 / WDCM 00102 / Lb 14).